The primary structure comprises 385 residues: MALEAGDMEEGQLSDSDSDMTVVPSDRPLQMAKVLGGGSAACAPVSHYRTVKHVDSSEESLDSDDDCSLWKRKRQKCHNTPPKPEPFPFGPSGQKTALNGGKKVNNIWGAVLQEQNQDAVATELGILGMEGSIDRSRQSETYNYLLAKKLAKKESQEYTKELDKDLDEYMHGDKKPGSKEDENGQGHLKRKRPVRDRLGNRVEMNYKGRYEITEEDAPEKVADEIAFRLQEPKKDLIARVVRILGNKKAIELLMETAEVEQNGGLFIMNGSRRRTPGGVFLNLLKNTPSISEEQIKDIFYVENQKEYENKKAARKRRTQLLGKKMKQAIKSLNFQEDDDTSRETFASDTNEALASLDEAQEGPGETKLDAEEAIEVDHPQDLDIF.

Acidic residues predominate over residues Met1–Ser18. The tract at residues Met1–Pro28 is disordered. N-acetylalanine is present on Ala2. Residues Ala2–Leu320 are necessary for interaction with CBP80. Residues Ser14, Ser16, Ser56, Ser57, Ser60, and Ser63 each carry the phosphoserine modification. Residues Lys71 to Arg74 carry the Nuclear localization signal motif. The interval Gln75–Gly101 is disordered. Positions Val120–Met129 match the Nuclear export signal motif. A compositionally biased stretch (basic and acidic residues) spans Lys164 to Gly184. The interval Lys164–Arg192 is disordered. A Nuclear localization signal motif is present at residues Lys189 to Arg192. Residues Glu219–Gln319 are sufficient for poly U RNA-binding. Residues Gly270–Gly278 form a necessary for poly U RNA-binding and snRNA export region. At Thr287 the chain carries Phosphothreonine. The disordered stretch occupies residues Gln335 to Phe385. Residues Glu343–Ala352 show a composition bias toward polar residues. Phosphoserine is present on Ser347. Basic and acidic residues predominate over residues Gly364–Phe385.

Belongs to the PHAX family. As to quaternary structure, found in a U snRNA export complex with PHAX/RNUXA, NCBP1/CBP80, NCBP2/CBP20, RAN, XPO1 and m7G-capped RNA. Part of a precomplex with PHAX/RNUXA, NCBP1/CBP80, NCBP2/CBP20 and m7G-capped RNA. Interacts with NCBP1/CBP80. Found in a complex with snoRNA. Interacts with NCBP2/CBP20. Interacts with DDX39A; this interaction stimulates PHAX RNA binding activity. Post-translationally, phosphorylated in the nucleus. Dephosphorylated in the cytoplasm.

It is found in the nucleus. Its subcellular location is the nucleoplasm. The protein localises to the cajal body. The protein resides in the cytoplasm. In terms of biological role, a phosphoprotein adapter involved in the XPO1-mediated U snRNA export from the nucleus. Bridge components required for U snRNA export, the cap binding complex (CBC)-bound snRNA on the one hand and the GTPase Ran in its active GTP-bound form together with the export receptor XPO1 on the other. Its phosphorylation in the nucleus is required for U snRNA export complex assembly and export, while its dephosphorylation in the cytoplasm causes export complex disassembly. It is recycled back to the nucleus via the importin alpha/beta heterodimeric import receptor. The directionality of nuclear export is thought to be conferred by an asymmetric distribution of the GTP- and GDP-bound forms of Ran between the cytoplasm and nucleus. Its compartmentalized phosphorylation cycle may also contribute to the directionality of export. Binds strongly to m7G-capped U1 and U5 small nuclear RNAs (snRNAs) in a sequence-unspecific manner and phosphorylation-independent manner. Also plays a role in the biogenesis of U3 small nucleolar RNA (snoRNA). Involved in the U3 snoRNA transport from nucleoplasm to Cajal bodies. Binds strongly to m7G-capped U3, U8 and U13 precursor snoRNAs and weakly to trimethylated (TMG)-capped U3, U8 and U13 snoRNAs. Also binds to telomerase RNA. The polypeptide is Phosphorylated adapter RNA export protein (Phax) (Mus musculus (Mouse)).